The following is a 1111-amino-acid chain: uncharacterized protein (1111 aa).

The signal sequence occupies residues 1-31 (MIRKLMKIPPFFTALFASAMFTLSVSQGVLA). 11 helical membrane-spanning segments follow: residues 490-510 (LPYL…IFKF), 538-558 (LALL…LAVC), 572-592 (FWHW…WISL), 620-640 (IIVV…TDAG), 644-664 (DVLG…IIAP), 694-714 (IPVG…LNLI), 797-817 (FIWT…VTVV), 840-860 (SITL…YVLV), 885-905 (ITTL…FATL), 922-942 (GLGF…ILLF), and 1003-1023 (LVIS…QLLL).

It belongs to the MscS (TC 1.A.23) family.

It localises to the cell membrane. This is an uncharacterized protein from Haemophilus influenzae (strain ATCC 51907 / DSM 11121 / KW20 / Rd).